Reading from the N-terminus, the 125-residue chain is Large-conductance mechanosensitive channel (125 aa).

2 helical membrane passes run 15–35 (MDLA…NSLV) and 67–87 (GSFL…FFLI).

Belongs to the MscL family. As to quaternary structure, homopentamer.

It is found in the cell membrane. In terms of biological role, channel that opens in response to stretch forces in the membrane lipid bilayer. May participate in the regulation of osmotic pressure changes within the cell. The chain is Large-conductance mechanosensitive channel from Lactobacillus gasseri (strain ATCC 33323 / DSM 20243 / BCRC 14619 / CIP 102991 / JCM 1131 / KCTC 3163 / NCIMB 11718 / NCTC 13722 / AM63).